Consider the following 602-residue polypeptide: 3-hydroxy-3-methylglutaryl-coenzyme A reductase 2 (602 aa).

Transmembrane regions (helical) follow at residues 44–67 (ASDA…FFSV) and 95–115 (AIVS…IGFV). The interval 116–187 (QTFVSRGNND…PLITSASSGE (72 aa)) is linker. A glycan (N-linked (GlcNAc...) asparagine) is linked at Asn-124. The segment at 188–602 (DEEIIKSVVQ…STKDVTKASS (415 aa)) is catalytic. Glu-281 (charge relay system) is an active-site residue. Residue Asn-345 is glycosylated (N-linked (GlcNAc...) asparagine). Lys-413 functions as the Charge relay system in the catalytic mechanism. A glycan (N-linked (GlcNAc...) asparagine) is linked at Asn-458. Asp-489 acts as the Charge relay system in catalysis. Catalysis depends on His-587, which acts as the Proton donor. Residue Asn-591 is glycosylated (N-linked (GlcNAc...) asparagine).

The protein belongs to the HMG-CoA reductase family.

Its subcellular location is the endoplasmic reticulum membrane. It catalyses the reaction (R)-mevalonate + 2 NADP(+) + CoA = (3S)-3-hydroxy-3-methylglutaryl-CoA + 2 NADPH + 2 H(+). It participates in metabolic intermediate biosynthesis; (R)-mevalonate biosynthesis; (R)-mevalonate from acetyl-CoA: step 3/3. Catalyzes the synthesis of mevalonate. The specific precursor of all isoprenoid compounds present in plants. This is 3-hydroxy-3-methylglutaryl-coenzyme A reductase 2 (HMG2) from Solanum lycopersicum (Tomato).